The following is a 98-amino-acid chain: Cystatin-A (98 aa).

N-acetylmethionine is present on Met-1. Positions 46–50 match the Secondary area of contact motif; it reads QVVAG.

It belongs to the cystatin family.

It is found in the cytoplasm. Functionally, this is an intracellular thiol proteinase inhibitor. The chain is Cystatin-A (CSTA) from Felis catus (Cat).